We begin with the raw amino-acid sequence, 391 residues long: Chaperone protein DnaJ (391 aa).

The 66-residue stretch at D2–G67 folds into the J domain. The segment at G148–K226 adopts a CR-type zinc-finger fold. Residues C161, C164, C178, C181, C200, C203, C214, and C217 each coordinate Zn(2+). CXXCXGXG motif repeat units follow at residues C161 to G168, C178 to G185, C200 to G207, and C214 to G221.

It belongs to the DnaJ family. As to quaternary structure, homodimer. Zn(2+) serves as cofactor.

It localises to the cytoplasm. In terms of biological role, participates actively in the response to hyperosmotic and heat shock by preventing the aggregation of stress-denatured proteins and by disaggregating proteins, also in an autonomous, DnaK-independent fashion. Unfolded proteins bind initially to DnaJ; upon interaction with the DnaJ-bound protein, DnaK hydrolyzes its bound ATP, resulting in the formation of a stable complex. GrpE releases ADP from DnaK; ATP binding to DnaK triggers the release of the substrate protein, thus completing the reaction cycle. Several rounds of ATP-dependent interactions between DnaJ, DnaK and GrpE are required for fully efficient folding. Also involved, together with DnaK and GrpE, in the DNA replication of plasmids through activation of initiation proteins. This is Chaperone protein DnaJ from Chlamydia abortus (strain DSM 27085 / S26/3) (Chlamydophila abortus).